The sequence spans 617 residues: V-type proton ATPase catalytic subunit A (617 aa).

At Asp2 the chain carries N-acetylalanine. Thr136 is subject to Phosphothreonine. 250 to 257 (GAFGCGKT) lines the ATP pocket. Position 384 is a phosphoserine; by AMPK (Ser384).

This sequence belongs to the ATPase alpha/beta chains family. In terms of assembly, V-ATPase is a heteromultimeric enzyme made up of two complexes: the ATP-hydrolytic V1 complex and the proton translocation V0 complex. The V1 complex consists of three catalytic AB heterodimers that form a heterohexamer, three peripheral stalks each consisting of EG heterodimers, one central rotor including subunits D and F, and the regulatory subunits C and H. The proton translocation complex V0 consists of the proton transport subunit a, a ring of proteolipid subunits c9c'', rotary subunit d, subunits e and f, and the accessory subunits ATP6AP1/Ac45 and ATP6AP2/PRR. Interacts with the V0 complex V-ATPase subunit a4 ATP6V0A4. Interacts with WFS1. Interacts with alpha-crystallin B chain/CRYAB and with MTOR, forming a ternary complex. (Microbial infection) Interacts with Rabies virus protein M; this interaction promotes virion uncoating. Post-translationally, phosphorylation at Ser-384 by AMPK down-regulates its enzyme activity. As to expression, high expression in the skin.

The protein resides in the cytoplasm. It localises to the cytosol. Its subcellular location is the cytoplasmic vesicle. It is found in the secretory vesicle. The protein localises to the clathrin-coated vesicle membrane. The protein resides in the lysosome. The enzyme catalyses ATP + H2O + 4 H(+)(in) = ADP + phosphate + 5 H(+)(out). ATP hydrolysis occurs at the interface between the nucleotide-binding domains of subunits A and B. ATP hydrolysis triggers a conformational change in the subunits D and F, which induces a shift of subunit d. The c-ring is subsequently rotated and results in a continuous proton translocation across the membrane. Functionally, catalytic subunit of the V1 complex of vacuolar(H+)-ATPase (V-ATPase), a multisubunit enzyme composed of a peripheral complex (V1) that hydrolyzes ATP and a membrane integral complex (V0) that translocates protons. V-ATPase is responsible for acidifying and maintaining the pH of intracellular compartments and in some cell types, is targeted to the plasma membrane, where it is responsible for acidifying the extracellular environment. In aerobic conditions, involved in intracellular iron homeostasis, thus triggering the activity of Fe(2+) prolyl hydroxylase (PHD) enzymes, and leading to HIF1A hydroxylation and subsequent proteasomal degradation. May play a role in neurite development and synaptic connectivity. Its function is as follows. (Microbial infection) Plays an important role in virion uncoating during Rabies virus replication after membrane fusion. Specifically, participates in the dissociation of incoming viral matrix M proteins uncoating through direct interaction. This is V-type proton ATPase catalytic subunit A (ATP6V1A) from Homo sapiens (Human).